The primary structure comprises 592 residues: Elongation factor 1 alpha-like protein (592 aa).

Disordered stretches follow at residues 1 to 35 (MSRHRDVKNLDLDDYELDEEPGEEELTEEQEEEFR) and 78 to 159 (SSKA…KQNP). The span at 12-32 (LDDYELDEEPGEEELTEEQEE) shows a compositional bias: acidic residues. The span at 82 to 111 (GAKEKQNTDSQKEKKQNKSKEALADAKDPL) shows a compositional bias: basic and acidic residues. Positions 113–124 (ESSNGIKNLSLN) are enriched in polar residues. Residues 137-151 (VKMKNSSESDNQPEK) show a composition bias toward basic and acidic residues. The 227-residue stretch at 175-401 (KPVVHLVVTG…DQLVPPEKPY (227 aa)) folds into the tr-type G domain. The interval 184–191 (GHVDSGKS) is G1. 184–191 (GHVDSGKS) is a GTP binding site. Residues 240–244 (GVTMD) form a G2 region. The interval 261–264 (DAPG) is G3. GTP contacts are provided by residues 323-326 (NKLD) and 352-355 (FKTS). The tract at residues 323–326 (NKLD) is G4. The G5 stretch occupies residues 363 to 365 (SAI).

This sequence belongs to the TRAFAC class translation factor GTPase superfamily. Classic translation factor GTPase family. In terms of assembly, component of the Dom34-Hbs1 complex, also named Pelota-HBS1L complex, composed of dom34 and hbs1.

It is found in the cytoplasm. The catalysed reaction is GTP + H2O = GDP + phosphate + H(+). Functionally, GTPase component of the Dom34-Hbs1 complex, a complex that recognizes stalled ribosomes and triggers the No-Go Decay (NGD) pathway. The Dom34-Hbs1 complex recognizes ribosomes stalled at the 3' end of an mRNA and engages stalled ribosomes by destabilizing mRNA in the mRNA channel. Following ribosome-binding, the Pelota-HBS1L complex promotes the disassembly of stalled ribosomes, followed by degradation of damaged mRNAs as part of the NGD pathway. The sequence is that of Elongation factor 1 alpha-like protein from Schizosaccharomyces pombe (strain 972 / ATCC 24843) (Fission yeast).